The chain runs to 736 residues: DNA ligase (736 aa).

Residues 41 to 45 (DQEYD), 91 to 92 (SL), and glutamate 125 each bind NAD(+). The active-site N6-AMP-lysine intermediate is the lysine 127. Arginine 148 lines the NAD(+) pocket. A disordered region spans residues 170–205 (ELTPLPLAGGAGGGPLDDSGSAPTPDPSRRREGKWN). Glutamate 215, lysine 347, and lysine 371 together coordinate NAD(+). Zn(2+) is bound by residues cysteine 463, cysteine 466, cysteine 481, and cysteine 487. Positions 656–736 (TLDSPVAGKT…GWAEIVAAAG (81 aa)) constitute a BRCT domain.

The protein belongs to the NAD-dependent DNA ligase family. LigA subfamily. It depends on Mg(2+) as a cofactor. Requires Mn(2+) as cofactor.

The enzyme catalyses NAD(+) + (deoxyribonucleotide)n-3'-hydroxyl + 5'-phospho-(deoxyribonucleotide)m = (deoxyribonucleotide)n+m + AMP + beta-nicotinamide D-nucleotide.. DNA ligase that catalyzes the formation of phosphodiester linkages between 5'-phosphoryl and 3'-hydroxyl groups in double-stranded DNA using NAD as a coenzyme and as the energy source for the reaction. It is essential for DNA replication and repair of damaged DNA. This chain is DNA ligase, found in Erythrobacter litoralis (strain HTCC2594).